A 379-amino-acid chain; its full sequence is Epoxyqueuosine reductase (379 aa).

Asp-139 acts as the Proton donor in catalysis. Residues 181 to 213 (IPLPVDQPVEEGCGKCVACMTICPTGAIVEPYT) form the 4Fe-4S ferredoxin-type domain. Residues Cys-193, Cys-196, Cys-199, Cys-203, Cys-219, Cys-246, Cys-249, and Cys-253 each coordinate [4Fe-4S] cluster.

This sequence belongs to the QueG family. As to quaternary structure, monomer. Cob(II)alamin serves as cofactor. [4Fe-4S] cluster is required as a cofactor.

The protein localises to the cytoplasm. The catalysed reaction is epoxyqueuosine(34) in tRNA + AH2 = queuosine(34) in tRNA + A + H2O. Its pathway is tRNA modification; tRNA-queuosine biosynthesis. Functionally, catalyzes the conversion of epoxyqueuosine (oQ) to queuosine (Q), which is a hypermodified base found in the wobble positions of tRNA(Asp), tRNA(Asn), tRNA(His) and tRNA(Tyr). This chain is Epoxyqueuosine reductase, found in Shigella dysenteriae serotype 1 (strain Sd197).